Reading from the N-terminus, the 384-residue chain is Formate-dependent phosphoribosylglycinamide formyltransferase (384 aa).

N(1)-(5-phospho-beta-D-ribosyl)glycinamide-binding positions include 14-15 (EL) and E74. Residues R106, K147, 152–157 (SSGKGQ), 187–190 (EEFI), and E195 contribute to the ATP site. In terms of domain architecture, ATP-grasp spans 111-300 (RLAAETLGLA…EFALHVRAIL (190 aa)). Residues E259 and E271 each coordinate Mg(2+). Residues D278, K348, and 355-356 (RR) each bind N(1)-(5-phospho-beta-D-ribosyl)glycinamide.

This sequence belongs to the PurK/PurT family. As to quaternary structure, homodimer.

It carries out the reaction N(1)-(5-phospho-beta-D-ribosyl)glycinamide + formate + ATP = N(2)-formyl-N(1)-(5-phospho-beta-D-ribosyl)glycinamide + ADP + phosphate + H(+). It participates in purine metabolism; IMP biosynthesis via de novo pathway; N(2)-formyl-N(1)-(5-phospho-D-ribosyl)glycinamide from N(1)-(5-phospho-D-ribosyl)glycinamide (formate route): step 1/1. In terms of biological role, catalyzes two reactions: the first one is the production of beta-formyl glycinamide ribonucleotide (GAR) from formate, ATP and beta GAR; the second, a side reaction, is the production of acetyl phosphate and ADP from acetate and ATP. Involved in the de novo purine biosynthesis. Catalyzes the transfer of formate to 5-phospho-ribosyl-glycinamide (GAR), producing 5-phospho-ribosyl-N-formylglycinamide (FGAR). Formate is provided by PurU via hydrolysis of 10-formyl-tetrahydrofolate. This is Formate-dependent phosphoribosylglycinamide formyltransferase from Bacillus subtilis (strain 168).